The sequence spans 549 residues: Glucose-6-phosphate isomerase (549 aa).

Residue Glu-355 is the Proton donor of the active site. Catalysis depends on residues His-387 and Lys-515.

Belongs to the GPI family.

The protein resides in the cytoplasm. It carries out the reaction alpha-D-glucose 6-phosphate = beta-D-fructose 6-phosphate. Its pathway is carbohydrate biosynthesis; gluconeogenesis. It participates in carbohydrate degradation; glycolysis; D-glyceraldehyde 3-phosphate and glycerone phosphate from D-glucose: step 2/4. In terms of biological role, catalyzes the reversible isomerization of glucose-6-phosphate to fructose-6-phosphate. The protein is Glucose-6-phosphate isomerase of Pasteurella multocida (strain Pm70).